Reading from the N-terminus, the 449-residue chain is Asparagine--tRNA ligase (449 aa).

It belongs to the class-II aminoacyl-tRNA synthetase family. As to quaternary structure, homodimer.

The protein localises to the cytoplasm. The catalysed reaction is tRNA(Asn) + L-asparagine + ATP = L-asparaginyl-tRNA(Asn) + AMP + diphosphate + H(+). This Mesomycoplasma hyopneumoniae (strain 232) (Mycoplasma hyopneumoniae) protein is Asparagine--tRNA ligase.